Here is a 968-residue protein sequence, read N- to C-terminus: RNA polymerase-associated protein RapA (968 aa).

In terms of domain architecture, Helicase ATP-binding spans 164–334; that stretch reads DVGRRHAPRV…FARLRLLDPN (171 aa). Residue 177–184 participates in ATP binding; sequence DEVGLGKT. The short motif at 280-283 is the DEAH box element; the sequence is DEAH. The Helicase C-terminal domain maps to 490-662; the sequence is RVEWLMGYLT…YLASPDQTEG (173 aa).

Belongs to the SNF2/RAD54 helicase family. RapA subfamily. In terms of assembly, interacts with the RNAP. Has a higher affinity for the core RNAP than for the holoenzyme. Its ATPase activity is stimulated by binding to RNAP.

Functionally, transcription regulator that activates transcription by stimulating RNA polymerase (RNAP) recycling in case of stress conditions such as supercoiled DNA or high salt concentrations. Probably acts by releasing the RNAP, when it is trapped or immobilized on tightly supercoiled DNA. Does not activate transcription on linear DNA. Probably not involved in DNA repair. The protein is RNA polymerase-associated protein RapA of Escherichia coli O139:H28 (strain E24377A / ETEC).